The chain runs to 196 residues: ATP-dependent Clp protease proteolytic subunit (196 aa).

Ser98 acts as the Nucleophile in catalysis. The active site involves His123.

The protein belongs to the peptidase S14 family. Fourteen ClpP subunits assemble into 2 heptameric rings which stack back to back to give a disk-like structure with a central cavity, resembling the structure of eukaryotic proteasomes.

It is found in the cytoplasm. It carries out the reaction Hydrolysis of proteins to small peptides in the presence of ATP and magnesium. alpha-casein is the usual test substrate. In the absence of ATP, only oligopeptides shorter than five residues are hydrolyzed (such as succinyl-Leu-Tyr-|-NHMec, and Leu-Tyr-Leu-|-Tyr-Trp, in which cleavage of the -Tyr-|-Leu- and -Tyr-|-Trp bonds also occurs).. Functionally, cleaves peptides in various proteins in a process that requires ATP hydrolysis. Has a chymotrypsin-like activity. Plays a major role in the degradation of misfolded proteins. This Actinobacillus pleuropneumoniae serotype 5b (strain L20) protein is ATP-dependent Clp protease proteolytic subunit.